Here is a 447-residue protein sequence, read N- to C-terminus: NAC domain containing protein 50 (447 aa).

A disordered region spans residues 1 to 21 (MGRESLAVVSSPPSATAPSTA). Residues 27–178 (LAPGFRFHPT…AYVLCRVFHK (152 aa)) form the NAC domain. A DNA-binding region spans residues 126-184 (LGMKKTLVFHSGRAPDGLRTNWVMHEYRLVEYETETNGSLLQDAYVLCRVFHKNNIGPP). 2 disordered regions span residues 246–303 (DATP…NKEA) and 371–392 (KENQ…EEKV). Positions 281–293 (TLKREHAEEDERP) are enriched in basic and acidic residues. Residues 392–447 (VNDLQKEVHQMSVERETFKLEMMSAEAMISILQSRIDALRQENEELKKKNASGQAS) adopt a coiled-coil conformation.

Interacts with JMJ14 and NAC052. As to expression, mostly expressed in floral organs, and, at low levels, in other organs.

The protein resides in the nucleus. In terms of biological role, transcriptional repressor that binds to the motif 5'-(C/T)A(C/A)G-3' in the promoter of target genes. Also binds to the 5'-CTTGNNNNNCAAG-3' consensus sequence in chromatin. Can bind to the mitochondrial dysfunction motif (MDM) present in the upstream regions of mitochondrial dysfunction stimulon (MDS) genes involved in mitochondrial retrograde regulation (MRR). Together with NAC051/NAC052 and JMJ14, regulates gene expression and flowering time by associating with the histone demethylase JMJ14, probably by the promotion of RNA-mediated gene silencing. This Arabidopsis thaliana (Mouse-ear cress) protein is NAC domain containing protein 50.